The sequence spans 116 residues: Holo-[acyl-carrier-protein] synthase (116 aa).

Residues D5 and E50 each coordinate Mg(2+).

The protein belongs to the P-Pant transferase superfamily. AcpS family. Mg(2+) serves as cofactor.

The protein localises to the cytoplasm. The catalysed reaction is apo-[ACP] + CoA = holo-[ACP] + adenosine 3',5'-bisphosphate + H(+). Functionally, transfers the 4'-phosphopantetheine moiety from coenzyme A to a Ser of acyl-carrier-protein. The protein is Holo-[acyl-carrier-protein] synthase of Nitratiruptor sp. (strain SB155-2).